We begin with the raw amino-acid sequence, 294 residues long: Holothin acyltransferase (294 aa).

Positions 17–146 (WTSKPASLEE…SRLVGIHNQQ (130 aa)) constitute an N-acetyltransferase domain.

It carries out the reaction marinoloyl-CoA C + holothin = thiomarinol C + CoA. It catalyses the reaction pseudomonoyl-CoA C + holothin = pseudomonic acid C--holothin + CoA. It functions in the pathway antibiotic biosynthesis. Its function is as follows. Acyltransferase that catalyzes the formation of pseudomonic acid C-holothin (PAC-holothin), a thiomarinol analog, from pseudomonoyl-CoA C (PAC-CoA) and holothin. Accepts linear CoA substrates of different lengths, including propionyl-, hexanoyl-, octanoyl-, oleoyl- and dodecanoyl-CoA, readily converting all into the corresponding acyl-holothin adducts. In vivo, is probably involved in the biosynthesis of thiomarinol, a naturally occurring double-headed antibiotic. The chain is Holothin acyltransferase from Pseudoalteromonas sp. (strain SANK 73390).